The sequence spans 845 residues: ABC transporter A family member 9 (845 aa).

A run of 7 helical transmembrane segments spans residues 33–53 (CVQI…NFWV), 192–212 (AFVA…FLGG), 235–255 (IASL…MPLF), 292–312 (IYFI…FAVF), 318–338 (FAMF…SFFL), 347–367 (AASI…SILS), and 417–437 (SKII…ALYL). The ABC transporter domain maps to 531–762 (VIIEGLTKHY…FGDGYSVRIN (232 aa)). Residue 565-572 (GANGAGKT) participates in ATP binding.

Belongs to the ABC transporter superfamily. ABCA family.

The protein resides in the membrane. The sequence is that of ABC transporter A family member 9 (abcA9) from Dictyostelium discoideum (Social amoeba).